Consider the following 747-residue polypeptide: Polyribonucleotide nucleotidyltransferase (747 aa).

The Mg(2+) site is built by Asp487 and Asp493. The 60-residue stretch at 554 to 613 folds into the KH domain; the sequence is PSTTTIKIDKDKIRDIIGPGGKVIKEICETSGAKIDISDDGSVSVYASDRDKLKVALDKI. The 69-residue stretch at 623 to 691 folds into the S1 motif domain; sequence GEIFNGTVMK…NKGKAKLTIK (69 aa). The segment at 691–747 is disordered; it reads KNADKDKSSNNPKPKNNVNNAKENSEPERRDSSKKRAWNEDSNNDKEEAITERKYFN. A compositionally biased stretch (low complexity) spans 699-712; sequence SNNPKPKNNVNNAK. Positions 727 to 747 are enriched in basic and acidic residues; that stretch reads AWNEDSNNDKEEAITERKYFN.

Belongs to the polyribonucleotide nucleotidyltransferase family. The cofactor is Mg(2+).

It localises to the cytoplasm. It carries out the reaction RNA(n+1) + phosphate = RNA(n) + a ribonucleoside 5'-diphosphate. Functionally, involved in mRNA degradation. Catalyzes the phosphorolysis of single-stranded polyribonucleotides processively in the 3'- to 5'-direction. This is Polyribonucleotide nucleotidyltransferase from Rickettsia felis (strain ATCC VR-1525 / URRWXCal2) (Rickettsia azadi).